The primary structure comprises 262 residues: Acyl-[acyl-carrier-protein]--UDP-N-acetylglucosamine O-acyltransferase (262 aa).

The protein belongs to the transferase hexapeptide repeat family. LpxA subfamily. In terms of assembly, homotrimer.

The protein resides in the cytoplasm. The enzyme catalyses a (3R)-hydroxyacyl-[ACP] + UDP-N-acetyl-alpha-D-glucosamine = a UDP-3-O-[(3R)-3-hydroxyacyl]-N-acetyl-alpha-D-glucosamine + holo-[ACP]. The protein operates within glycolipid biosynthesis; lipid IV(A) biosynthesis; lipid IV(A) from (3R)-3-hydroxytetradecanoyl-[acyl-carrier-protein] and UDP-N-acetyl-alpha-D-glucosamine: step 1/6. Functionally, involved in the biosynthesis of lipid A, a phosphorylated glycolipid that anchors the lipopolysaccharide to the outer membrane of the cell. The protein is Acyl-[acyl-carrier-protein]--UDP-N-acetylglucosamine O-acyltransferase of Vibrio campbellii (strain ATCC BAA-1116).